We begin with the raw amino-acid sequence, 622 residues long: Threonine--tRNA ligase (622 aa).

An editing domain region spans residues 1–141; it reads MKTLLIHSDY…SRKITTERKE (141 aa). Residues 199-498 are catalytic; it reads PHVKYIKEKE…TLENKPPALP (300 aa). Zn(2+)-binding residues include C291, H343, and H467.

The protein belongs to the class-II aminoacyl-tRNA synthetase family. In terms of assembly, homodimer. Zn(2+) is required as a cofactor.

It is found in the cytoplasm. It carries out the reaction tRNA(Thr) + L-threonine + ATP = L-threonyl-tRNA(Thr) + AMP + diphosphate + H(+). Functionally, catalyzes the attachment of threonine to tRNA(Thr) in a two-step reaction: L-threonine is first activated by ATP to form Thr-AMP and then transferred to the acceptor end of tRNA(Thr). Also edits incorrectly charged L-seryl-tRNA(Thr). In Methanococcus maripaludis (strain C5 / ATCC BAA-1333), this protein is Threonine--tRNA ligase.